A 103-amino-acid chain; its full sequence is ATP synthase F(0) complex subunit g, mitochondrial (103 aa).

A2 carries the N-acetylalanine modification. An N6-acetyllysine mark is found at K11, K24, and K54.

This sequence belongs to the ATPase g subunit family. As to quaternary structure, component of the ATP synthase complex composed at least of ATP5F1A/subunit alpha, ATP5F1B/subunit beta, ATP5MC1/subunit c (homooctomer), MT-ATP6/subunit a, MT-ATP8/subunit 8, ATP5ME/subunit e, ATP5MF/subunit f, ATP5MG/subunit g, ATP5MK/subunit k, ATP5MJ/subunit j, ATP5F1C/subunit gamma, ATP5F1D/subunit delta, ATP5F1E/subunit epsilon, ATP5PF/subunit F6, ATP5PB/subunit b, ATP5PD/subunit d, ATP5PO/subunit OSCP. ATP synthase complex consists of a soluble F(1) head domain (subunits alpha(3) and beta(3)) - the catalytic core - and a membrane F(0) domain - the membrane proton channel (subunits c, a, 8, e, f, g, k and j). These two domains are linked by a central stalk (subunits gamma, delta, and epsilon) rotating inside the F1 region and a stationary peripheral stalk (subunits F6, b, d, and OSCP).

It localises to the mitochondrion. It is found in the mitochondrion inner membrane. In terms of biological role, subunit g, of the mitochondrial membrane ATP synthase complex (F(1)F(0) ATP synthase or Complex V) that produces ATP from ADP in the presence of a proton gradient across the membrane which is generated by electron transport complexes of the respiratory chain. ATP synthase complex consist of a soluble F(1) head domain - the catalytic core - and a membrane F(1) domain - the membrane proton channel. These two domains are linked by a central stalk rotating inside the F(1) region and a stationary peripheral stalk. During catalysis, ATP synthesis in the catalytic domain of F(1) is coupled via a rotary mechanism of the central stalk subunits to proton translocation. In vivo, can only synthesize ATP although its ATP hydrolase activity can be activated artificially in vitro. Part of the complex F(0) domain. The protein is ATP synthase F(0) complex subunit g, mitochondrial of Rattus norvegicus (Rat).